Here is a 122-residue protein sequence, read N- to C-terminus: Large ribosomal subunit protein uL14 (122 aa).

The protein belongs to the universal ribosomal protein uL14 family. Part of the 50S ribosomal subunit. Forms a cluster with proteins L3 and L19. In the 70S ribosome, L14 and L19 interact and together make contacts with the 16S rRNA in bridges B5 and B8.

Binds to 23S rRNA. Forms part of two intersubunit bridges in the 70S ribosome. This is Large ribosomal subunit protein uL14 from Xanthomonas oryzae pv. oryzae (strain MAFF 311018).